We begin with the raw amino-acid sequence, 216 residues long: Small ribosomal subunit protein uS2 (216 aa).

The protein belongs to the universal ribosomal protein uS2 family.

The polypeptide is Small ribosomal subunit protein uS2 (Carsonella ruddii (strain PV)).